Here is a 477-residue protein sequence, read N- to C-terminus: Pentatricopeptide repeat-containing protein At4g14170 (477 aa).

PPR repeat units follow at residues 65-96 (NVVL…MPYR), 97-131 (NIFS…SCVR), 133-167 (DDFT…GFSS), 168-198 (SLFV…MPVR), 199-233 (DSVL…GFAL), 234-264 (DSVV…CIRR), 269-299 (GLNL…MSRR), 300-334 (DVIS…GIEP), 335-369 (NAVT…NIVP), and 370-400 (ELKH…MPVK). The interval 405–477 (VMGAVLSGCK…ISKVPGCSSI (73 aa)) is type E motif; degenerate.

It belongs to the PPR family. PCMP-E subfamily.

The protein is Pentatricopeptide repeat-containing protein At4g14170 (PCMP-E17) of Arabidopsis thaliana (Mouse-ear cress).